The chain runs to 267 residues: Elsinochrome reductase 1 (267 aa).

4 residues coordinate NADP(+): Ile-26, Asp-72, Asn-99, and Arg-132. Ser-149 (proton donor) is an active-site residue. Residues Tyr-163, Lys-167, Ile-196, and Thr-198 each coordinate NADP(+). Tyr-163 serves as the catalytic Proton acceptor. The Lowers pKa of active site Tyr role is filled by Lys-167.

It belongs to the short-chain dehydrogenases/reductases (SDR) family.

Reductase; part of the gene cluster that mediates the biosynthesis of elsinochromes, pigments consisting of at least four interconvertible tautomers (A, B, C and D) that have a core phenolic quinone to which various side chains are attached and which play an important role in fungal pathogenesis. The non-reducing polyketide synthase PKS1 was proposed to iteratively catalyze decarboxylation between acetyl-CoA and malonyl-CoA subunits for polyketide chain elongation. The released polyketide undergoes cyclization to form an aromatic ring, and proceeds via serial modification steps to produce the heptaketide back- bone of elsinochrome. As elsinochrome has a symmetrical structure, two identical heptaketides are fused to form a core 1,2-dihydrobenzo-perylene ring structure, which can then be successively modified to produce the various derivatives of elsinochrome. Some of these reactions may be cooperatively carried out, at least in part, by the products of RDT1, OXR1 and PKS1. PRF1, embedded within the elsinochrome cluster possibly functions to stabilize some of the biosynthetic enzymes required for elsinochrome production. As prefoldin is a hexamer containing 2 a and 4 b subunits, additional prefoldin subunits, whose coding genes may not immediately link to the elsinochrome biosynthetic gene cluster, are required to fulfill the chaperone function. In addition, no methyltransferase-coding gene exists within the biosynthetic gene cluster, even though elsinochrome has four methyl groups at positions C3, C7, C8 and C12. Apparently, the identified gene cluster does not contain the entire entourage of genes responsible for elsinochrome biosynthesis. Once elsinochrome is synthesized, it must be exported outside the fungal cells, which is probably accomplished by the ECT1 transporter, to avoid toxicity. In Elsinoe fawcettii (Citrus scab fungus), this protein is Elsinochrome reductase 1.